The sequence spans 315 residues: G-box-binding factor 1 (315 aa).

Disordered regions lie at residues 1–56 (MGTS…GSPS) and 93–268 (MPMP…RDEL). A compositionally biased stretch (pro residues) spans 46 to 56 (PFFPSPVGSPS). Polar residues-rich tracts occupy residues 133 to 164 (GSGN…QEQG) and 178 to 187 (ASSQSTTGEI). Residues 222–285 (ELKRQKRKQS…DKLKSENNSI (64 aa)) form the bZIP domain. The interval 224–243 (KRQKRKQSNRESARRSRLRK) is basic motif. The span at 249-262 (QLQQRVESLSNENQ) shows a compositional bias: polar residues. A leucine-zipper region spans residues 250 to 285 (LQQRVESLSNENQSLRDELQRLSSECDKLKSENNSI).

It belongs to the bZIP family. Monomer and heterodimers with BZIP16 and BZIP68. Interacts with GIP1. Phosphorylated by CK2. In terms of tissue distribution, found in both light and dark grown leaves.

The protein resides in the nucleus. Binds to the G-box motif (5'-CCACGTGG-3') of the rbcS-1A gene promoter. G-box and G-box-like motifs are cis-acting elements defined in promoters of certain plant genes which are regulated by such diverse stimuli as light-induction or hormone control. Binds to the G-box motif 5'-CACGTG-3' of LHCB2.4 (At3g27690) promoter. May act as transcriptional activator in light-regulated expression of LHCB2.4. Probably binds DNA as monomer. DNA-binding activity is redox-dependent. The polypeptide is G-box-binding factor 1 (GBF1) (Arabidopsis thaliana (Mouse-ear cress)).